The chain runs to 458 residues: F-box/WD repeat-containing protein 9 (458 aa).

Met-1 carries the N-acetylmethionine modification. Positions 1 to 28 are disordered; that stretch reads MELPPGPRDDPHAWDDDSDPELEPDTDA. Residues 16 to 28 show a composition bias toward acidic residues; the sequence is DDSDPELEPDTDA. Ser-18 and Ser-59 each carry phosphoserine. An F-box domain is found at 76-123; that stretch reads VPGLLSLPPELLLEICAYLDARLVLHVLPRVCHALRDLVRDRVTWRLR. 7 WD repeats span residues 171–210, 224–261, 264–301, 305–342, 344–381, 387–424, and 427–458; these read GHFASIDSVLLLQGGTLCLSGSRDRNVNLWDLQQLGVEPS, THKGWVWSLAALDHRVCSGSWDSTVKLWDMAADGQQFG, KGKAAVLCLSYRPDILVTGTYDKKVTVYDPRVGPALLK, LHSSAVLALLADDRHIISGSEDHTLVVFDRRANSVLQR, QLDSYLLCMSYQEPQLWAGDNQGLLHVFANRSGCFQLV, GHRSQITGIKHSLGALYTTSTDKTIRVHVPTDPPRTIC, and SHHNVLNGICAEGNLVVAASGGLSLEVWRLQA.

As to quaternary structure, interacts with SKP1 and CUL1.

Functionally, substrate-recognition component of the SCF (SKP1-CUL1-F-box protein)-type E3 ubiquitin ligase complex. In Bos taurus (Bovine), this protein is F-box/WD repeat-containing protein 9 (FBXW9).